A 320-amino-acid chain; its full sequence is Malate dehydrogenase (320 aa).

NAD(+)-binding positions include 10-15 (GAGQIG) and D34. R83 and R89 together coordinate substrate. Residues N96 and 119 to 121 (ITN) contribute to the NAD(+) site. Positions 121 and 152 each coordinate substrate. H176 functions as the Proton acceptor in the catalytic mechanism.

This sequence belongs to the LDH/MDH superfamily. MDH type 3 family.

The enzyme catalyses (S)-malate + NAD(+) = oxaloacetate + NADH + H(+). Catalyzes the reversible oxidation of malate to oxaloacetate. The sequence is that of Malate dehydrogenase from Beijerinckia indica subsp. indica (strain ATCC 9039 / DSM 1715 / NCIMB 8712).